The primary structure comprises 621 residues: MSPVFPMLTVLTMFYYMCLRRRARTATRGDMMNSHRTIVSNSRTSPLNAEVVQYAKEVVDFSSHYGSENSMSYTMWNLAGVPNVFPSSGDFTQTAVFRTYGTWWDQCPSASLPFRRTPSSFQSQDYVELTFEQQVYPTAVHVLETYHPGAVIRILACSANPYSPNPPAEVRWEILWSERPMKVNASQARQFKPCIKQINFPTNLIRLEVNSSLLDYYTELDAVVLHGTKDKPLLSLKTALVDMNDLEDDDYEEKDGCEMDALNKKFSSAALGDGPHNGYFDKLPYELIQLILNHLSLPDLCRLAQTCRLLHQHCCDPLQYIHLNLQPYWARLDDTSLEFLQARCVLVQWLNLSWTGNRGFISVSGFSRFLKVCGSELVRLELSCSHFLNDTCLEVISEMCPNLQDLNLSSCDKLPPQAFGHIAKLCSLKRLVLYRTKVEQTALLSILNFCAELQHLSLGSCVMIEDYDVIASMIGAKCKNLRTLDLWRCKNITENGIAELASGCVLLEELDLGWCPTLQSSTGCFVRLARQLPNLQKLFLTANRSVCDTDIEELASNCTRLQQLDILGTRMVSPASLRKLLESCKDLSLLDVSFCSQIDNKAVLELNASFPKVFIKKSFTQ.

Arg-28 is modified (asymmetric dimethylarginine). The F-box domain maps to 277–332 (NGYFDKLPYELIQLILNHLSLPDLCRLAQTCRLLHQHCCDPLQYIHLNLQPYWARL). LRR repeat units lie at residues 376–397 (ELVR…EVIS), 402–421 (NLQD…AFGH), 427–448 (SLKR…SILN), 452–474 (ELQH…ASMI), 480–501 (NLRT…AELA), 504–524 (CVLL…STGC), 532–558 (LPNL…ASNC), 559–583 (TRLQ…LLES), and 584–609 (CKDL…LNAS).

Part of a SCF (SKP1-CUL1-F-box) protein ligase complex. Interacts with FAF2 and VCP. Interacts with PPTC7; this interaction promotes destruction of BNIP3 and NIX and mitophagy suppression.

The protein localises to the cytoplasm. The protein resides in the nucleus. Its subcellular location is the mitochondrion outer membrane. In terms of biological role, substrate-recognition component of the mitochondria-localized SCF-FBXL4 ubiquitin E3 ligase complex that plays a role in the restriction of mitophagy by controlling the degradation of BNIP3 and NIX mitophagy receptors. Also rescues mitochondrial injury through reverting hyperactivation of DRP1-mediated mitochondrial fission. The polypeptide is F-box/LRR-repeat protein 4 (Fbxl4) (Mus musculus (Mouse)).